The primary structure comprises 436 residues: Lactonohydrolase oryL (436 aa).

Positions 1–27 (MLSYTSHCLQALLGVASLPYRQYQAYS) are cleaved as a signal peptide.

This sequence belongs to the SMP-30/CGR1 family.

It functions in the pathway secondary metabolite biosynthesis. In terms of biological role, lactonohydrolase; part of the gene cluster that mediates the biosynthesis of oryzines, natural products with an unusual maleidride backbone. The two subunits of the fungal fatty acid synthase oryfasA and oryfasB probably form octenoic acid. This fatty acid is most likely activated by the acyl-CoA ligase oryP to give octenyl-CoA before the citrate synthase-like protein oryE catalyzes condensation with oxaloacetate to form tricarboxylic acid. The next steps of the pathways are conjectural, but a favorite possible route has been proposed, beginning with decarboxylation and concomitant dehydration by the decarboxylase oryM, followed by tautomerization, which may lead to the production of a diene intermediate. Reduction of this diene intermediate could give the known metabolite piliformic acid. On the pathway to oryzine B and oryzine A, however, hydroxylation of the diene by the alpha-ketoglutarate-dependent dioxygenase oryG and lactonisation by the lactonohydrolases oryH or oryL could give oryzine B directly. Finally, enoyl reduction by the dehydrogenase oryD would then convert oryzine B into oryzine A. This Aspergillus oryzae (strain ATCC 42149 / RIB 40) (Yellow koji mold) protein is Lactonohydrolase oryL.